We begin with the raw amino-acid sequence, 100 residues long: Cytochrome c2 iso-1 (100 aa).

Residues Cys11, Cys14, His15, and Met76 each coordinate heme c.

It belongs to the cytochrome c family. Binds 1 heme c group covalently per subunit.

Its function is as follows. Cytochrome c2 is found mainly in purple, non-sulfur, photosynthetic bacteria where it functions as the electron donor to the oxidized bacteriochlorophyll in the photophosphorylation pathway. However, it may also have a role in the respiratory chain and is found in some non-photosynthetic bacteria. This Magnetospirillum molischianum (Rhodospirillum molischianum) protein is Cytochrome c2 iso-1.